Here is a 178-residue protein sequence, read N- to C-terminus: Ribosome maturation factor RimM (178 aa).

Residues 101-178 form the PRC barrel domain; it reads ADEYYWYQLE…VMRVEWDADF (78 aa).

This sequence belongs to the RimM family. In terms of assembly, binds ribosomal protein uS19.

It localises to the cytoplasm. An accessory protein needed during the final step in the assembly of 30S ribosomal subunit, possibly for assembly of the head region. Essential for efficient processing of 16S rRNA. May be needed both before and after RbfA during the maturation of 16S rRNA. It has affinity for free ribosomal 30S subunits but not for 70S ribosomes. This chain is Ribosome maturation factor RimM, found in Pseudomonas fluorescens (strain Pf0-1).